Consider the following 1314-residue polypeptide: Phosphoribosylformylglycinamidine synthase (1314 aa).

ATP-binding positions include 307-318 and A674; that span reads GAATGAGGEIRD. Mg(2+)-binding residues include D675, E714, N718, and D880. S882 serves as a coordination point for ATP. Residues 1063 to 1314 form the Glutamine amidotransferase type-1 domain; the sequence is IAILREQGVN…LFAGARKALG (252 aa). The active-site Nucleophile is the C1156. Catalysis depends on residues H1279 and E1281.

In the N-terminal section; belongs to the FGAMS family. As to quaternary structure, monomer.

Its subcellular location is the cytoplasm. It catalyses the reaction N(2)-formyl-N(1)-(5-phospho-beta-D-ribosyl)glycinamide + L-glutamine + ATP + H2O = 2-formamido-N(1)-(5-O-phospho-beta-D-ribosyl)acetamidine + L-glutamate + ADP + phosphate + H(+). It functions in the pathway purine metabolism; IMP biosynthesis via de novo pathway; 5-amino-1-(5-phospho-D-ribosyl)imidazole from N(2)-formyl-N(1)-(5-phospho-D-ribosyl)glycinamide: step 1/2. Phosphoribosylformylglycinamidine synthase involved in the purines biosynthetic pathway. Catalyzes the ATP-dependent conversion of formylglycinamide ribonucleotide (FGAR) and glutamine to yield formylglycinamidine ribonucleotide (FGAM) and glutamate. The polypeptide is Phosphoribosylformylglycinamidine synthase (Neisseria gonorrhoeae (strain ATCC 700825 / FA 1090)).